A 396-amino-acid chain; its full sequence is Cell division protein DivIB (396 aa).

Disordered stretches follow at residues 1–23 (MSKD…SEWQ) and 37–116 (EVAL…ATKE). The Cytoplasmic segment spans residues 1 to 130 (MSKDKKNEDK…AKIPGIHILR (130 aa)). 2 stretches are compositionally biased toward basic and acidic residues: residues 37 to 65 (EVAL…KQDQ) and 75 to 116 (ESAK…ATKE). A helical transmembrane segment spans residues 131–151 (AFTILFPSLLLLIVSAYLLSP). The Extracellular portion of the chain corresponds to 152–396 (YATMKDIRVE…NQTNQRSSRR (245 aa)). One can recognise a POTRA domain in the interval 153–223 (ATMKDIRVEG…TKFTIKVKEY (71 aa)). Residues 361–385 (KAKQEAKEAEKKQEEEQKKQEEESN) show a composition bias toward basic and acidic residues. A disordered region spans residues 361-396 (KAKQEAKEAEKKQEEEQKKQEEESNRNQTNQRSSRR). The span at 386-396 (RNQTNQRSSRR) shows a compositional bias: low complexity.

The protein belongs to the FtsQ/DivIB family. DivIB subfamily.

The protein resides in the cell membrane. Functionally, cell division protein that may be involved in stabilizing or promoting the assembly of the division complex. The polypeptide is Cell division protein DivIB (Streptococcus pneumoniae (strain ATCC BAA-255 / R6)).